A 1886-amino-acid chain; its full sequence is Highly reducing polyketide synthase (1886 aa).

The Ketosynthase family 3 (KS3) domain maps to 11 to 434 (TQDVAIVGLS…GANAHAVLDD (424 aa)). Active-site for beta-ketoacyl synthase activity residues include Cys182, His317, and His357. The malonyl-CoA:ACP transacylase (MAT) domain stretch occupies residues 483–568 (FLFSGQDQQS…VNNDLANTKK (86 aa)). The N-terminal hotdog fold stretch occupies residues 616 to 750 (RSLIGAPQPS…GLLSIEYESS (135 aa)). Residues 616–926 (RSLIGAPQPS…CTAISEATNP (311 aa)) enclose the PKS/mFAS DH domain. The interval 618–924 (LIGAPQPSYG…LHCTAISEAT (307 aa)) is dehydratase (DH) domain. His648 functions as the Proton acceptor; for dehydratase activity in the catalytic mechanism. The segment at 778–926 (HTTQSPKALY…CTAISEATNP (149 aa)) is C-terminal hotdog fold. The active-site Proton donor; for dehydratase activity is Asp838. The enoylreductase (ER) domain stretch occupies residues 1169-1480 (GMLDEIYFEA…AGKHMGKVAL (312 aa)). Positions 1503 to 1681 (ATYVLVGGFG…VSLDLGLMRD (179 aa)) are catalytic ketoreductase (KRc) domain. In terms of domain architecture, Carrier spans 1802–1879 (DVTDLVLEIL…DLVDKIVAKS (78 aa)). Position 1839 is an O-(pantetheine 4'-phosphoryl)serine (Ser1839).

It participates in mycotoxin biosynthesis. Functionally, highly reducing polyketide synthase; part of the gene cluster that mediates the biosynthesis of the selective antifungal agent ascochitine, an o-quinone methide that plays a possible protective role against other microbial competitors in nature and is considered to be important for pathogenicity of legume-associated Didymella species. The pathway probably begins with the synthesis of a keto-aldehyde intermediate by the ascochitine non-reducing polyketide synthase pksAC from successive condensations of 4 malonyl-CoA units, presumably with a simple acetyl-CoA starter unit. Release of the keto-aldehyde intermediate is consistent with the presence of the C-terminal reductive release domain. The HR-PKS (orf7) probably makes a diketide starter unit which is passed to the non-reducing polyketide synthase pksAC for further extension, producing ascochital and ascochitine. The aldehyde dehydrogenase (orf1), the 2-oxoglutarate-dependent dioxygenase (orf3) and the dehydrogenase (orf9) are probably involved in subsequent oxidations of methyl groups to the carboxylic acid of the heterocyclic ring. The ascochitine gene cluster also includes a gene encoding a short peptide with a cupin domain (orf2) that is often found in secondary metabolite gene clusters and which function has still to be determined. This Didymella fabae (Leaf and pod spot disease fungus) protein is Highly reducing polyketide synthase.